We begin with the raw amino-acid sequence, 603 residues long: Proline--tRNA ligase (603 aa).

Belongs to the class-II aminoacyl-tRNA synthetase family. ProS type 1 subfamily. Homodimer.

It is found in the cytoplasm. It catalyses the reaction tRNA(Pro) + L-proline + ATP = L-prolyl-tRNA(Pro) + AMP + diphosphate. In terms of biological role, catalyzes the attachment of proline to tRNA(Pro) in a two-step reaction: proline is first activated by ATP to form Pro-AMP and then transferred to the acceptor end of tRNA(Pro). As ProRS can inadvertently accommodate and process non-cognate amino acids such as alanine and cysteine, to avoid such errors it has two additional distinct editing activities against alanine. One activity is designated as 'pretransfer' editing and involves the tRNA(Pro)-independent hydrolysis of activated Ala-AMP. The other activity is designated 'posttransfer' editing and involves deacylation of mischarged Ala-tRNA(Pro). The misacylated Cys-tRNA(Pro) is not edited by ProRS. In Paenarthrobacter aurescens (strain TC1), this protein is Proline--tRNA ligase.